Consider the following 501-residue polypeptide: Solute carrier family 2, facilitated glucose transporter member 5 (501 aa).

M1 carries the N-acetylmethionine modification. Over 1 to 18 (MEQQDPIKKEGRLTPVLA) the chain is Cytoplasmic. The chain crosses the membrane as a helical span at residues 19 to 39 (LATLIAAFGSSFQYGYNVAAV). Y32 lines the D-fructose pocket. Over 40-68 (NSPAELMKAFYNETHYSRFSEYISEFSLT) the chain is Extracellular. Residue N51 is glycosylated (N-linked (GlcNAc...) asparagine). A helical transmembrane segment spans residues 69–91 (LLWSISVSMFPFGGFVGSLMVGP). Topologically, residues 92-98 (LVNRLGR) are cytoplasmic. A helical membrane pass occupies residues 99-119 (KGTLLFNNIFSIVPAILMGTS). The Extracellular segment spans residues 120–126 (KTARSYE). The chain crosses the membrane as a helical span at residues 127 to 149 (MIILSRLLVGICAGLSSNVVPMY). The Cytoplasmic portion of the chain corresponds to 150–161 (LGELSPKNLRGA). A helical membrane pass occupies residues 162–182 (LGVVPQLFITVGILVAQIVGL). Q167 is a binding site for D-fructose. Residues 183–192 (RSLLATEEGW) are Extracellular-facing. The helical transmembrane segment at 193–213 (PILLGLTAIPAALQLLLLPFF) threads the bilayer. Topologically, residues 214–277 (PESPRYLLIQ…MFRMRSLRWQ (64 aa)) are cytoplasmic. Residues 278–298 (VISIIILMGGQQLSGVNAIYY) form a helical membrane-spanning segment. D-fructose is bound by residues Q288 and 296-298 (IYY). The Extracellular portion of the chain corresponds to 299–313 (YADQIYLSAGVKDQD). A helical membrane pass occupies residues 314-334 (VQYVTVGTGAVNVLMTICAVF). Topologically, residues 335–342 (VVEYLGRR) are cytoplasmic. The chain crosses the membrane as a helical span at residues 343-363 (ALLLLGFSVCFIACCVLTVAL). Over 364 to 371 (ALQDRVSW) the chain is Extracellular. Residues 372–394 (MPYISIVCVISYVIGHALGPSPI) form a helical membrane-spanning segment. H387 is a binding site for D-fructose. Residues 395 to 412 (PALLITEVFLQSSRSAAY) are Cytoplasmic-facing. A helical membrane pass occupies residues 413 to 433 (MVGGTVHWLSNFAVGLVFPFI). 419 to 420 (HW) serves as a coordination point for D-fructose. The Extracellular portion of the chain corresponds to 434-439 (QVGLGA). The helical transmembrane segment at 440-460 (YSFIIFAVICLLTTIYIFLIV) threads the bilayer. Over 461 to 501 (PETKGKTFVEINHIFTKMNKVSDVHPAKDELKDIPLSAVEL) the chain is Cytoplasmic.

It belongs to the major facilitator superfamily. Sugar transporter (TC 2.A.1.1) family. Glucose transporter subfamily.

The protein resides in the apical cell membrane. It localises to the cell membrane. Its subcellular location is the sarcolemma. It carries out the reaction D-fructose(out) = D-fructose(in). In terms of biological role, functions as a fructose transporter that has only low activity with other monosaccharides. Can mediate the uptake of deoxyglucose, but with low efficiency. Essential for fructose uptake in the small intestine. Plays a role in the regulation of salt uptake and blood pressure in response to dietary fructose. Required for the development of high blood pressure in response to high dietary fructose intake. In Equus caballus (Horse), this protein is Solute carrier family 2, facilitated glucose transporter member 5.